Reading from the N-terminus, the 385-residue chain is MKNICILGATGSIGTQTLDVIEKESNKFKLVAFSANKSYEKIITIIEKFNPVYGAINDKETFLKVKDHCNINNIKINLLYGMDGLIKISTLEEVELVVTSIVGMIGLVPTLEAINAGKDIALANKETLVTGGELVMKAAKQNNVKILPVDSEHGAIFQCLQGNSYKDIETIYVTASGGPFRQSKLEELINITPEQALKHPKWNMGKKISIDSSTMINKGLEVIEAHWLFNVGYDKIKVLVHPQSIVHSMVEYIDGSIIAQLASTDMRLPIQYALNYPVRNKKVVEKLDVYNMGNLTFEKPDFEKFRGLKLAYEAGKLGGIMPTIFNASNEVAVNMFLNNHIKYLEIVDIVEECMNKFENKSIKDVEDILNAEAKVRSFIKNKYNF.

Residues T10, G11, S12, I13, K37, and N124 each coordinate NADPH. K125 is a 1-deoxy-D-xylulose 5-phosphate binding site. E126 contacts NADPH. D150 lines the Mn(2+) pocket. Positions 151, 152, 176, and 199 each coordinate 1-deoxy-D-xylulose 5-phosphate. E152 serves as a coordination point for Mn(2+). G205 serves as a coordination point for NADPH. 4 residues coordinate 1-deoxy-D-xylulose 5-phosphate: S212, N217, K218, and E221. Residue E221 coordinates Mn(2+).

It belongs to the DXR family. The cofactor is Mg(2+). Mn(2+) serves as cofactor.

The catalysed reaction is 2-C-methyl-D-erythritol 4-phosphate + NADP(+) = 1-deoxy-D-xylulose 5-phosphate + NADPH + H(+). The protein operates within isoprenoid biosynthesis; isopentenyl diphosphate biosynthesis via DXP pathway; isopentenyl diphosphate from 1-deoxy-D-xylulose 5-phosphate: step 1/6. Functionally, catalyzes the NADPH-dependent rearrangement and reduction of 1-deoxy-D-xylulose-5-phosphate (DXP) to 2-C-methyl-D-erythritol 4-phosphate (MEP). This chain is 1-deoxy-D-xylulose 5-phosphate reductoisomerase, found in Clostridium novyi (strain NT).